A 1072-amino-acid polypeptide reads, in one-letter code: Isoleucine--tRNA ligase, cytoplasmic (1072 aa).

The short motif at 47 to 57 (PFATGTPHYGH) is the 'HIGH' region element. Residue Lys-486 forms a Glycyl lysine isopeptide (Lys-Gly) (interchain with G-Cter in ubiquitin) linkage. The short motif at 602–606 (KMSKS) is the 'KMSKS' region element. ATP is bound at residue Lys-605. Residues Ser-829 and Ser-1059 each carry the phosphoserine modification.

Belongs to the class-I aminoacyl-tRNA synthetase family.

It localises to the cytoplasm. The enzyme catalyses tRNA(Ile) + L-isoleucine + ATP = L-isoleucyl-tRNA(Ile) + AMP + diphosphate. The polypeptide is Isoleucine--tRNA ligase, cytoplasmic (ILS1) (Saccharomyces cerevisiae (strain ATCC 204508 / S288c) (Baker's yeast)).